The following is a 453-amino-acid chain: MISSKPRLVVPYGLKTLLEGVSRAILKTNPTNITQFAAVYFKELIVFREGNSSLDIKDLIKQFHQMKVEKWAEGVTVEKKECIKEPIKPPPVPCKPTHMEKSTDTEEDNVAGPLFSNKTTQFPSVHAEVQSEETSEGARGPSDKPTTPKTDYTPPSSPPPAPVSAEYAYVPADPAQFAAQMLGNVPSTYSEVLMVDVATSTPAVPQDVLSAEFAEEVVLSAPLVCSGETVEVQVVSKTSAQVVVGPVSEAEPPKASSAPLQGEQEPPAHEAPDTQVTSASRISSIYNDVPVNEGVVYVEEIPGYIVIPFTDHDQVACVKEIEQSPPGSPKAVEPKTKISIESLKTVQVEENSQHKSSVHVEAEATVLLSNTALDGQPEVPAEPLDAEGFFKVASENSLHLETEIVIINPDDPGQEESGGNAAPHSSGDPFPPAPGGLTEPEMQPDGEAAPEQV.

The 38-residue stretch at 12 to 49 folds into the RIIa domain; it reads YGLKTLLEGVSRAILKTNPTNITQFAAVYFKELIVFRE. Disordered stretches follow at residues 86–165, 246–278, and 406–453; these read PIKP…PVSA, PVSEAEPPKASSAPLQGEQEPPAHEAPDTQVTS, and IINP…PEQV. A compositionally biased stretch (low complexity) spans 143 to 154; that stretch reads DKPTTPKTDYTP.

Interacts with FSCB. Post-translationally, phosphorylated on tyrosine residues during in vitro capacitation. Dephosphorylation affects its ability to bind calcium. In terms of tissue distribution, expressed in spermatozoa.

Its subcellular location is the cytoplasm. It localises to the cytoskeleton. The protein resides in the cell projection. It is found in the cilium. The protein localises to the flagellum. May function as a regulator of both motility- and head-associated functions such as capacitation and the acrosome reaction. May bind calcium in vitro. In Mus musculus (Mouse), this protein is Calcium-binding tyrosine phosphorylation-regulated protein (Cabyr).